The chain runs to 316 residues: Secreted effector protein SifB (316 aa).

This sequence belongs to the Sif family.

The protein localises to the secreted. The protein resides in the host cytoplasm. Functionally, effector proteins function to alter host cell physiology and promote bacterial survival in host tissues. In Salmonella typhimurium (strain LT2 / SGSC1412 / ATCC 700720), this protein is Secreted effector protein SifB (sifB).